A 511-amino-acid chain; its full sequence is Ent-copalyl diphosphate synthase (511 aa).

The a divalent metal cation site is built by Asp291 and Asp293. The DXDD motif motif lies at 291–294 (DSDD).

The protein belongs to the terpene synthase family. In terms of assembly, homodimer. Requires a divalent metal cation as cofactor.

The catalysed reaction is (2E,6E,10E)-geranylgeranyl diphosphate = ent-copalyl diphosphate. The protein operates within antibiotic biosynthesis. In terms of biological role, involved in viguiepinol biosynthesis. Catalyzes the conversion of geranylgeranyl diphosphate (GGDP) into copalyl diphosphate (ent-CDP). This chain is Ent-copalyl diphosphate synthase, found in Streptomyces sp. (strain KO-3988).